Consider the following 150-residue polypeptide: UPF0178 protein Bpet3884 (150 aa).

This sequence belongs to the UPF0178 family.

The chain is UPF0178 protein Bpet3884 from Bordetella petrii (strain ATCC BAA-461 / DSM 12804 / CCUG 43448).